The following is a 78-amino-acid chain: MQNIEKKIKKIIAQQLGLIEQKITNESLLVEDLNADSLDIVELIMAFEEEFNIEITDEEAENLTSVQSIFDIIKKYVF.

Residues 2-77 (QNIEKKIKKI…SIFDIIKKYV (76 aa)) enclose the Carrier domain. Serine 37 carries the post-translational modification O-(pantetheine 4'-phosphoryl)serine.

The protein belongs to the acyl carrier protein (ACP) family. In terms of processing, 4'-phosphopantetheine is transferred from CoA to a specific serine of apo-ACP by AcpS. This modification is essential for activity because fatty acids are bound in thioester linkage to the sulfhydryl of the prosthetic group.

It localises to the cytoplasm. It functions in the pathway lipid metabolism; fatty acid biosynthesis. In terms of biological role, carrier of the growing fatty acid chain in fatty acid biosynthesis. The protein is Acyl carrier protein of Buchnera aphidicola subsp. Baizongia pistaciae (strain Bp).